The primary structure comprises 154 residues: Cold shock domain-containing protein C2 (154 aa).

Phosphoserine is present on Ser19. The interval 38–62 is disordered; it reads GGGIAPRDLPSPLPTKRTRTYSATA. Positions 69-136 constitute a CSD domain; it reads VFKGVCKQFS…KFQAVEVVLT (68 aa).

It is found in the nucleus. It localises to the cytoplasm. Functionally, RNA-binding factor which binds specifically to the very 3'-UTR ends of both histone H1 and H3.3 mRNAs, encompassing the polyadenylation signal. Might play a central role in the negative regulation of histone variant synthesis in the developing brain. The chain is Cold shock domain-containing protein C2 (Csdc2) from Mus musculus (Mouse).